The primary structure comprises 563 residues: Inorganic phosphate transporter PT2 (563 aa).

Disordered regions lie at residues 1-51 and 67-96; these read MAPR…SGEE and DGGA…PAYS. Over 1 to 127 the chain is Extracellular; it reads MAPRYHSAAE…NGEKQSLLVP (127 aa). A helical membrane pass occupies residues 128 to 148; that stretch reads CLAVFSSNYNFTVTSIALFLM. At 149–168 the chain is on the cytoplasmic side; that stretch reads NQDPLYKDASDTVVGSSTVK. Residues 169-189 form a helical membrane-spanning segment; that stretch reads MLSYAGAIVGMCTMGYLGDLI. The Extracellular portion of the chain corresponds to 190–192; the sequence is GRR. A helical membrane pass occupies residues 193-213; it reads LAMILTLALVFIGALLSSICA. At 214–217 the chain is on the cytoplasmic side; the sequence is WGDG. The helical transmembrane segment at 218-238 threads the bilayer; the sequence is VTVLVIMGVCRFVLGVGSGGV. The Extracellular segment spans residues 239-263; that stretch reads YPLSAVSAAEGAGSEKSNDRSMRVS. Residues 264–284 form a helical membrane-spanning segment; the sequence is WAYSMNVPGIMFPYIVALVLW. Residues 285 to 291 lie on the Cytoplasmic side of the membrane; that stretch reads CTTHNVD. The chain crosses the membrane as a helical span at residues 292-312; the sequence is VCFRILLGFGALPALLIWLPA. Over 313 to 342 the chain is Extracellular; sequence WRMKEDRAYVAKDFAKHLAGVFVSRSYWRQ. The helical transmembrane segment at 343 to 363 threads the bilayer; that stretch reads LLGTGVCWLLYDVTAYGILLV. At 364 to 380 the chain is on the cytoplasmic side; it reads QPEITQSIWGNSSSVTD. A helical transmembrane segment spans residues 381–401; it reads VIWQNIILNGMGIPGCFMGIL. The Extracellular segment spans residues 402–412; it reads VLKQMGVKWLQ. A helical transmembrane segment spans residues 413 to 433; it reads FWGFVGLAVSAFLMAATVEIL. The Cytoplasmic portion of the chain corresponds to 434 to 440; it reads QGKAWAQ. The helical transmembrane segment at 441 to 461 threads the bilayer; the sequence is LVLLCIVNFFINWGASITTFI. Topologically, residues 462–477 are extracellular; it reads LPSLVFPPEVRSTYSG. A helical membrane pass occupies residues 478 to 498; that stretch reads ISAALGKIGAVGGIYTMKAIL. Topologically, residues 499-504 are cytoplasmic; sequence STGGLT. The helical transmembrane segment at 505–525 threads the bilayer; it reads PMMICAGVPSLAAAILTWFYV. Over 526–563 the chain is Extracellular; that stretch reads DPVPNTLRSSFLQCFGSLAGSCPFIDCRKFRRGSRAFE.

Belongs to the major facilitator superfamily. Phosphate:H(+) symporter (TC 2.A.1.9) family.

The protein localises to the cell membrane. The enzyme catalyses phosphate(in) = phosphate(out). Inorganic phosphate transporter. Activity is likely sodium-independent. Exhibits higher activity under acidic pH, implying that either the monovalent form of phosphate is the preferred substrate or the transport activity is H(+)-dependent. The chain is Inorganic phosphate transporter PT2 from Toxoplasma gondii (strain ATCC 50861 / VEG).